We begin with the raw amino-acid sequence, 240 residues long: MAKGFTFKQFHVDDGGCGMAVSTDGVLLGAWATLPKQGKLIDIGTGSGLLALMMAQRTAPAPCSIIAIELDDSAADAAAKNFSNSPWSSSLHCVKQDIQQWNRTQPKNNIGNIICNPPYFNFGLQADSQTRATARHTDTLTHDALLQSITHLLAPEGIVSLILPEYEGRQLIQAAEKYGLQCQRLCEVKSTEKKPVSRLLIELTSSTVKSAPQKEALCIHDSGQYSAQFIALTRDFYLKL.

The protein belongs to the methyltransferase superfamily. tRNA (adenine-N(6)-)-methyltransferase family.

The protein localises to the cytoplasm. It catalyses the reaction adenosine(37) in tRNA1(Val) + S-adenosyl-L-methionine = N(6)-methyladenosine(37) in tRNA1(Val) + S-adenosyl-L-homocysteine + H(+). Specifically methylates the adenine in position 37 of tRNA(1)(Val) (anticodon cmo5UAC). This chain is tRNA1(Val) (adenine(37)-N6)-methyltransferase, found in Photobacterium profundum (strain SS9).